The chain runs to 265 residues: MKIGIDAGGTLIKIVQEHDNRRYYRTELTTNIQKVIDWLNNEEIETLKLTGGNAGVIADQIHHSPEIFVEFDASSKGLEILLDEQGHQIEHYIFANVGTGTSFHYFDGKDQQRVGGVGTGGGMIQGLGYLLSNITDYKELTNLAQNGDRDAIDLKVKHIYKDTEPPIPGDLTAANFGNVLHHLDNQFTSANKLASAIGVVGEVITTMAITLAREYKTNHVVYIGSSFNNNQLLREVVENYTVLRGFKPYYIENGAFSGALGALYL.

6 to 13 (DAGGTLIK) is a binding site for ATP. Glu70 serves as the catalytic Proton acceptor. ATP is bound by residues Thr99, 121 to 125 (GGMIQ), Tyr137, and Ser225.

The protein belongs to the type II pantothenate kinase family. As to quaternary structure, homodimer.

Its subcellular location is the cytoplasm. It catalyses the reaction (R)-pantothenate + ATP = (R)-4'-phosphopantothenate + ADP + H(+). It participates in cofactor biosynthesis; coenzyme A biosynthesis; CoA from (R)-pantothenate: step 1/5. Catalyzes the phosphorylation of pantothenate (Pan), the first step in CoA biosynthesis. The polypeptide is Type II pantothenate kinase (Staphylococcus epidermidis (strain ATCC 12228 / FDA PCI 1200)).